The following is a 513-amino-acid chain: Calcium-dependent protein kinase 2 (513 aa).

Gly-2 carries the N-myristoyl glycine lipid modification. A Protein kinase domain is found at 72 to 326 (YIIDEKLGQG…IEEALNHPWI (255 aa)). Residues 78 to 86 (LGQGTYGCV) and Lys-101 each bind ATP. The active-site Proton acceptor is the Asp-192. Positions 345–353 (NLKNFKKEN) match the J domain autoinhibitory motif motif. Residues 345 to 380 (NLKNFKKENELKKIALTIIAKHLCDVEINNLRNIFI) form a j domain region. The J domain EF-hand interaction motif motif lies at 354–363 (ELKKIALTII). EF-hand domains lie at 370–405 (VEINNLRNIFIALDVDNSGTLSSQEILDGLKKIGYQ), 406–441 (KIPPDIHQVLRDIDSNASGQIHYTDFLAATIDKQTY), 442–477 (LKKEVCLIPFKFFDIDGNGKISVEELKRIFGRDDIE), and 480–513 (LIDKAIDSLLQEVDLNGDGEIDFHEFMLMMSKKK). The Ca(2+) site is built by Asp-383, Asp-385, Ser-387, Thr-389, and Glu-394. Asp-455, Asp-457, Asn-459, Lys-461, Glu-466, Asp-493, Asn-495, Asp-497, Glu-499, and Glu-504 together coordinate Ca(2+).

This sequence belongs to the protein kinase superfamily. Ser/Thr protein kinase family. CDPK subfamily. In terms of assembly, monomer. Mg(2+) is required as a cofactor. Myristoylated; myristoylation may target it to different subcellular compartments. In terms of processing, autophosphorylated in vitro.

The catalysed reaction is L-seryl-[protein] + ATP = O-phospho-L-seryl-[protein] + ADP + H(+). It catalyses the reaction L-threonyl-[protein] + ATP = O-phospho-L-threonyl-[protein] + ADP + H(+). Its activity is regulated as follows. Activated by calcium. Upon calcium binding to the EF-hand domains, the C-terminus of the junction domain (J domain) undergoes a conformational change which results in the dissociation of the pseudo-substrate inhibitory motif from the catalytic domain. This, in turn, may facilitate the autophosphorylation of the activation loop at Thr-232, which leads to the kinase activation. Functionally, calcium-dependent protein kinase which acts as a sensor and effector of intracellular Ca(2+) levels probably in part downstream of cGMP-activated PKG kinase. During male gametogenesis in the mosquito gut, required for male exflagellation, possibly by regulating male gamete exit from the host erythrocytes. Not required for asexual blood stage proliferation. This chain is Calcium-dependent protein kinase 2, found in Plasmodium falciparum (isolate K1 / Thailand).